The chain runs to 89 residues: UPF0250 protein Bphy_0213 (89 aa).

The protein belongs to the UPF0250 family.

This chain is UPF0250 protein Bphy_0213, found in Paraburkholderia phymatum (strain DSM 17167 / CIP 108236 / LMG 21445 / STM815) (Burkholderia phymatum).